The sequence spans 430 residues: Transcriptional regulatory protein RXT2 (430 aa).

Positions 408-430 are disordered; sequence EIENTMEDGVVDDNEPDEEANRA.

Belongs to the RXT2 family. Component of the RPD3C(L) complex composed of at least ASH1, CTI6, DEP1, PHO23, RPD3, RXT2, RXT3, SAP30, SDS3, SIN3, UME1 and UME6.

The protein localises to the nucleus. Functionally, component of the RPD3C(L) histone deacetylase complex (HDAC) responsible for the deacetylation of lysine residues on the N-terminal part of the core histones (H2A, H2B, H3 and H4). Histone deacetylation gives a tag for epigenetic repression and plays an important role in transcriptional regulation, cell cycle progression and developmental events. The chain is Transcriptional regulatory protein RXT2 (RXT2) from Saccharomyces cerevisiae (strain ATCC 204508 / S288c) (Baker's yeast).